Reading from the N-terminus, the 548-residue chain is CTL-like protein DDB_G0288717 (548 aa).

The interval 1–44 (MWAPEEDYKQPLLTNSRVANNGNNNNSNGRGGSSSPSTRLQPEH) is disordered. A glycan (N-linked (GlcNAc...) asparagine) is linked at Asn25. A helical membrane pass occupies residues 52–72 (ILFTILFLLVIGGMAAISGIA). Asn97 is a glycosylation site (N-linked (GlcNAc...) asparagine). 4 helical membrane-spanning segments follow: residues 125-145 (DILIYSVLLAIALGAAWIQLL), 151-171 (FFIYFTLCVGVALVATLGGLF), 184-204 (MIVGGCIIICTLVLVVVIVYL), and 226-246 (PSVFVIASLVVLFFIGFIAYW). An N-linked (GlcNAc...) asparagine glycan is attached at Asn273. A run of 2 helical transmembrane segments spans residues 290–310 (NLMYFMIFGFFWASSFISAVF) and 350–370 (FGSLAFGSLLIAFIEFMAFML). The N-linked (GlcNAc...) asparagine glycan is linked to Asn377. A run of 3 helical transmembrane segments spans residues 381–401 (KLVVMVVSCLQCILGCIESIV), 442–462 (FIGGLVLLLGKILGSAASALF), and 479–499 (IALSAIFAFCIFNLFTHIVGI). N-linked (GlcNAc...) asparagine glycosylation occurs at Asn544.

This sequence belongs to the CTL (choline transporter-like) family.

The protein localises to the membrane. The polypeptide is CTL-like protein DDB_G0288717 (Dictyostelium discoideum (Social amoeba)).